We begin with the raw amino-acid sequence, 265 residues long: Inositol monophosphatase 2 (265 aa).

Residues E65, D86, L88, and D89 each contribute to the Mg(2+) site. A substrate-binding site is contributed by E65. Substrate contacts are provided by residues L88–T91, G189–C191, E208, and D216. Mg(2+) is bound at residue D216.

The protein belongs to the inositol monophosphatase superfamily. The cofactor is Mg(2+). In terms of tissue distribution, low expression in roots, stems, leaves, flowers and young and mature green fruits. Expressed in the stem/leaf junctions, below the shoot apex and on the abaxial side of the petiole of the first expanded leaflets.

The catalysed reaction is a myo-inositol phosphate + H2O = myo-inositol + phosphate. It functions in the pathway polyol metabolism; myo-inositol biosynthesis; myo-inositol from D-glucose 6-phosphate: step 2/2. Its function is as follows. Responsible for the provision of inositol required for synthesis of phosphatidylinositol and polyphosphoinositides. The chain is Inositol monophosphatase 2 (IMP2) from Solanum lycopersicum (Tomato).